A 1708-amino-acid polypeptide reads, in one-letter code: MTGAPPYNPQSPTQQPRFPVYSPPNKNRSYYPNNDQYQQHPPQTPPAFAPQPSLSRSPHYSHAPSPLPATLPPLNGGAPPPGHHSEPSSQYQAHSSAGTPQFSLPRPYSASMMSSNGASPYNHSTSSHAHPSARLESLSQSPPKKETEPLYPIGGNGAPGYSSSMMREPRPASPPRETKHARAADPMSFASILSGPTEESSPKKQPSLPEALPAPATTITPPPPALAPVPARRRLTPPPVTHGLPPTSQLKVKEPEPISPAALPRLEKKPGAEKRRRNAEQEPKSAEALPVASANGAFEPTKAARVSNRKTLTERDAETINKIIAEIDNADKSDVESPGFEAEYDGYIVKSKKRALDAEKAEGIRRKRRRHDFLVKLGKTFEKQANAGVDRFRAANEASVIAEVQAKEIQDEKERKKDMQRKRRRENTVRLEMQKKLEAERKANKANDAAEKAKFLREAERAQRKIKSTKRALEGVTSPEEIGEVTPLAPNLEGGTTSSFHIGRSSPSRRKSGRSGTSRPKKSKEQKQAEKDAAEAAYAAMENDEPLPLAPKEDPRKETLKKEAKGARSKEPTPSPVSTFESKGYNQIYEQIWRDIARKDIPKVYRIKTLSLSTRQENLRKTAQLASKQSRKWQERTNKSMKDTQARAKRTMREMMSFWKRNEREERDLRRLAEKQEIESAKKAEAEREANRQKRKLNFLISQTELYSHFIGRKIKGAGADSSGDTAVDGSDETIQPGKADHTIDLPPSVADVGTKVTNFEDLDFDAEDETALRQAAMANAQNAVKEAQERARAFNAEENPMAALDEGELNFQNPTSLGDIEISQPKMLTAKLKEYQLKGLNWLVNLYEQGINGILADEMGLGKTIQSISVMAYLAEVHNIWGPFLVIAPASTLHNWQQEITKFVPDIKVLPYWGSAKDRKVLRKFWDRKHITYTKESEFHVLVTSYQLVVLDSQYFQKVKWQYMILDEAQAIKSSQSSRWKNLLGFHCRNRLLLTGTPIQNNMQELWALLHFIMPTLFDSHDEFSEWFSKDIESHAQSNTKLNEDQLRRLHMILKPFMLRRVKKHVQQELGDKVEKDVFCDLTYRQRAYYANLRNRVSIMDLIEKAAVGDEADSTTLMNLVMQFRKVCNHPDLFERAETKSPFSVGYFAETASFVREGQNVDVRYSTRNLIEYSLPRLLCSSSGRVDMAGPGNEQAGFRGKYLQHLMNIFTPENIKRSIDEDGGFSFLRFADTSINEAYEQSHLGVFERAVRRRGQSNRLSRLNVIYDDEEDEQTSKSVLPHSLFNIVQRNDRQAVRNVTVEGYMRDLMNVSEVTFEREGLDVIEPSASPAASAPPITISCSGQVALRETQDSFFNVSVRHALFSTPSRQMEQQILEKKLDPAPFSLPPMLPKPISTKGRYTHIEVPSMRRFVTDSGKLAKLDELLRELKAGGHRVLLYFQMTRMIDLMEEYLTYRNYKYCRLDGSTKLEDRRDTVADFQQRPEIFVFLLSTRAGGLGINLTAADTVIFYDSDWNPTIDSQAMDRAHRLGQTRQVTVYRLITRGTIEERIRKRALQKEEVQRVVISGGAAGGVDFNTRNRESRTKDIAMWLADDEQAELIEQKEKEALDRGEVFGAGKGGKKAAQKRKKDLTLDDMYHEGEGNFDDISAKPSGAATPVSTADNFGTPSSTPVPKRGRGRGTGKGSSKRAKTTTERLRLIDGDGGLES.

4 disordered regions span residues 1–312 (MTGA…RKTL), 410–584 (QDEK…ESKG), 626–648 (ASKQ…QARA), and 718–750 (AGAD…PPSV). Composition is skewed to polar residues over residues 24-37 (PNKN…NDQY), 87-102 (PSSQ…TPQF), and 111-129 (SMMS…SSHA). Over residues 206 to 219 (PSLPEALPAPATTI) the composition is skewed to low complexity. 2 stretches are compositionally biased toward basic and acidic residues: residues 265-285 (RLEK…EPKS) and 426-463 (ENTV…ERAQ). Residues 395 to 478 (ANEASVIAEV…TKRALEGVTS (84 aa)) adopt a coiled-coil conformation. A compositionally biased stretch (basic residues) spans 507 to 522 (PSRRKSGRSGTSRPKK). 3 stretches are compositionally biased toward basic and acidic residues: residues 523 to 534 (SKEQKQAEKDAA), 551 to 571 (PKED…RSKE), and 632 to 646 (KWQE…DTQA). Residues 592–717 (IWRDIARKDI…SHFIGRKIKG (126 aa)) form the DBINO domain. A coiled-coil region spans residues 634 to 706 (QERTNKSMKD…LNFLISQTEL (73 aa)). One can recognise a Helicase ATP-binding domain in the interval 845 to 1017 (VNLYEQGING…WALLHFIMPT (173 aa)). 858–865 (DEMGLGKT) contributes to the ATP binding site. A DEAQ box motif is present at residues 968–971 (DEAQ). In terms of domain architecture, Helicase C-terminal spans 1422 to 1582 (KLDELLRELK…GVDFNTRNRE (161 aa)). The disordered stretch occupies residues 1643-1708 (GNFDDISAKP…LIDGDGGLES (66 aa)). Residues 1658–1672 (PVSTADNFGTPSSTP) show a composition bias toward polar residues. Basic residues predominate over residues 1675 to 1691 (KRGRGRGTGKGSSKRAK). The segment covering 1692-1701 (TTTERLRLID) has biased composition (basic and acidic residues).

This sequence belongs to the SNF2/RAD54 helicase family. Component of the INO80 chromatin-remodeling complex.

The protein localises to the nucleus. It catalyses the reaction ATP + H2O = ADP + phosphate + H(+). In terms of biological role, ATPase component of the INO80 complex which remodels chromatin by shifting nucleosomes and is involved in DNA repair. The chain is Chromatin-remodeling ATPase INO80 (ino80) from Neosartorya fischeri (strain ATCC 1020 / DSM 3700 / CBS 544.65 / FGSC A1164 / JCM 1740 / NRRL 181 / WB 181) (Aspergillus fischerianus).